The primary structure comprises 698 residues: MTDAKYVLCRWEKRLWPAKVLARTETSAKNKRKKEFFLDVQILSLKEKIQVKSSAVEALQKSHIENIAAFLASQNEVPATPLEELTYRRSLRVALDVLNERTSLSPESHPVENGSTPSQKGKPDADMASQVSSAPSPSFLSEDDQAVAAQCASKRRWECSPKSLSPLSASEEDLRCKVDPKTGLSESGALGTEVPAPTGDESQNGSGSQLDHGQESTTKKRQRNSGEKPARRGKAESGLSKGDSVAESGGQASSCVALASPRLPSQTWEGDPCAGVEGCDPVESSGNIRPLLDSERSKGRLTKRPRLDGGRNPLPRHLGTRTVGAVPSRRSCSGEVTTLRRAGDSDRPEEADPMSSEESTGFKSVHSLLEEEEEEEEEEEEEEEPPRILLYHEPRSFEVGMLVWLKYQKYPFWPAVVKSVRRRDKKASVLFIEGNMNPKGRGITVSLRRLKHFDCKEKHALLDRAKEDFAQAIGWCVSLITDYRVRLGCGSFAGSFLEYYAADISYPVRKSIQQDVLGTRFPQLGKGDPEEPMGDSRLGQWRPCRKVLPDRSRAARDKANQKLVEYIVKAKGAESHLRAILHSRKPSRWLKTFLSSNQYVTCMETYLEDEAQLDEVVEYLQGVCRDMDGEMPARGSGDRIRFILDVLLPEAIICAISAVEAVDYKTAEQKYLRGPTLSYREKEIFDNELLEERNRRRR.

Disordered regions lie at residues 102-145 and 159-386; these read TSLS…EDDQ and CSPK…EEPP. Ser-105 carries the post-translational modification Phosphoserine. Positions 129 to 139 are enriched in polar residues; the sequence is SQVSSAPSPSF. Residues Ser-165, Ser-168, and Ser-170 each carry the phosphoserine modification. Polar residues predominate over residues 200–211; the sequence is DESQNGSGSQLD. Composition is skewed to basic and acidic residues over residues 212–235 and 341–350; these read HGQE…RGKA and RAGDSDRPEE. Residues Ser-355 and Ser-356 each carry the phosphoserine modification. Acidic residues predominate over residues 370–384; that stretch reads EEEEEEEEEEEEEEE. The 62-residue stretch at 399–460 folds into the PWWP domain; the sequence is VGMLVWLKYQ…KHFDCKEKHA (62 aa).

The protein belongs to the PWWP3A family. In terms of assembly, interacts with TP53BP1 (via BRCT domain); the interaction is not dependent on its phosphorylation status. Binds nucleosomes. Interacts with trimethylated 'Lys-36' of histone H3 (H3K36me3) (in vitro).

It localises to the nucleus. Its function is as follows. Involved in the DNA damage response pathway by contributing to the maintenance of chromatin architecture. Recruited to the vicinity of DNA breaks by TP53BP1 and plays an accessory role to facilitate damage-induced chromatin changes and promoting chromatin relaxation. Required for efficient DNA repair and cell survival following DNA damage. The sequence is that of PWWP domain-containing DNA repair factor 3A from Rattus norvegicus (Rat).